The primary structure comprises 582 residues: Formate--tetrahydrofolate ligase (582 aa).

65–72 contacts ATP; that stretch reads TPLGEGKT.

This sequence belongs to the formate--tetrahydrofolate ligase family.

The catalysed reaction is (6S)-5,6,7,8-tetrahydrofolate + formate + ATP = (6R)-10-formyltetrahydrofolate + ADP + phosphate. It functions in the pathway one-carbon metabolism; tetrahydrofolate interconversion. The protein is Formate--tetrahydrofolate ligase of Vibrio atlanticus (strain LGP32) (Vibrio splendidus (strain Mel32)).